The chain runs to 594 residues: uncharacterized protein (594 aa).

The segment at residues 11–38 is a DNA-binding region (zn(2)-C6 fungal-type); sequence CELCRRKKIRCNRELPSCQNCIVYQEEC. A helical transmembrane segment spans residues 503 to 523; it reads YLWVFLYCPFTPFLVLFSNIV.

Its subcellular location is the nucleus. The protein resides in the membrane. This is an uncharacterized protein from Schizosaccharomyces pombe (strain 972 / ATCC 24843) (Fission yeast).